We begin with the raw amino-acid sequence, 123 residues long: Gamma-synuclein (123 aa).

2 consecutive repeat copies span residues 20–30 (EKTKQGVTEAA) and 31–41 (EKTKEGVMYVG). Residues 20–67 (EKTKQGVTEAAEKTKEGVMYVGTKTKGERGTSVTSVAEKTKEQANAVS) are 4 X 11 AA tandem repeats of [EGSA]-K-T-K-[EQ]-[GQ]-V-X(4). The stretch at 42–56 (TKTKGERGTSVTSVA) is one 3; approximate repeat. Repeat unit 4 spans residues 57 to 67 (EKTKEQANAVS). 2 positions are modified to phosphoserine: Ser67 and Ser72. The disordered stretch occupies residues 93–123 (GVVRKEDLEPPAQDQEAKEQEEGEEAKSGGD). A compositionally biased stretch (basic and acidic residues) spans 107–123 (QEAKEQEEGEEAKSGGD). The residue at position 120 (Ser120) is a Phosphoserine; by BARK1, CaMK2 and CK2.

The protein belongs to the synuclein family. In terms of assembly, may be a centrosome-associated protein. Interacts with MYOC; affects its secretion and its aggregation. Phosphorylated. Phosphorylation by GRK5 appears to occur on residues distinct from the residue phosphorylated by other kinases. Specifically expressed in the peripheral nervous system. High expression in motoneurons of the brainstem. Also found in neurons of many other brain regions including the cerebellar cortex, thalamus, hypothalamus and CA1, CA2, CA3 and CA4 regions of the hippocampus.

The protein resides in the cytoplasm. The protein localises to the perinuclear region. It is found in the cytoskeleton. Its subcellular location is the microtubule organizing center. It localises to the centrosome. The protein resides in the spindle. Plays a role in neurofilament network integrity. May be involved in modulating axonal architecture during development and in the adult. In vitro, increases the susceptibility of neurofilament-H to calcium-dependent proteases. May also function in modulating the keratin network in skin. Activates the MAPK and Elk-1 signal transduction pathway. The polypeptide is Gamma-synuclein (Sncg) (Rattus norvegicus (Rat)).